Consider the following 376-residue polypeptide: Carbohydrate sulfotransferase 14 (376 aa).

The interval 1-30 (MFPRPLTPLAAPKSAETLGRTPRRAPLGRA) is disordered. Residues 1 to 39 (MFPRPLTPLAAPKSAETLGRTPRRAPLGRARAGLGGPPL) are Cytoplasmic-facing. A compositionally biased stretch (low complexity) spans 18–30 (LGRTPRRAPLGRA). Residues 40-60 (LLPSMLMFAVIVASSGLLLMI) form a helical; Signal-anchor for type II membrane protein membrane-spanning segment. The Lumenal portion of the chain corresponds to 61 to 376 (ERGILSEMKP…PNVTKEACHQ (316 aa)). The disordered stretch occupies residues 76–96 (PSHKGAAWSGTDPKPRGLSLD). A glycan (N-linked (GlcNAc...) asparagine) is linked at Asn-110. 3'-phosphoadenylyl sulfate contacts are provided by residues 155-161 (PKVACSN) and 213-221 (RDPLERLLS). Asn-368 carries an N-linked (GlcNAc...) asparagine glycan.

The protein belongs to the sulfotransferase 2 family.

The protein resides in the golgi apparatus membrane. It carries out the reaction dermatan + n 3'-phosphoadenylyl sulfate = dermatan 4'-sulfate + n adenosine 3',5'-bisphosphate + n H(+). In terms of biological role, catalyzes the transfer of sulfate to position 4 of the N-acetylgalactosamine (GalNAc) residue of dermatan sulfate. Plays a pivotal role in the formation of 4-0-sulfated IdoA blocks in dermatan sulfate. Transfers sulfate to the C-4 hydroxyl of beta1,4-linked GalNAc that is substituted with an alpha-linked iduronic acid (IdoUA) at the C-3 hydroxyl. Transfers sulfate more efficiently to GalNAc residues in -IdoUA-GalNAc-IdoUA- than in -GlcUA-GalNAc-GlcUA-sequences. Has preference for partially desulfated dermatan sulfate. Addition of sulfate to GalNAc may occur immediately after epimerization of GlcUA to IdoUA. Appears to have an important role in the formation of the cerebellar neural network during postnatal brain development. The sequence is that of Carbohydrate sulfotransferase 14 (Chst14) from Mus musculus (Mouse).